A 106-amino-acid chain; its full sequence is Biogenesis of lysosome-related organelles complex 1 subunit BLS1 (106 aa).

This sequence belongs to the BLOC1S1 family. In terms of assembly, component of the biogenesis of lysosome-related organelles complex-1 (BLOC-1).

The protein localises to the endosome. Its function is as follows. Component of the biogenesis of lysosome-related organelles complex-1 (BLOC-1), a complex involved in endosomal cargo sorting. This is Biogenesis of lysosome-related organelles complex 1 subunit BLS1 (BLS1) from Candida glabrata (strain ATCC 2001 / BCRC 20586 / JCM 3761 / NBRC 0622 / NRRL Y-65 / CBS 138) (Yeast).